Consider the following 335-residue polypeptide: Mitochondrial uncoupling protein 4C (335 aa).

Solcar repeat units lie at residues 34-125 (RNLF…FRRP), 137-229 (LKIY…SKRT), and 238-329 (EGLP…LRQW). A run of 6 helical transmembrane segments spans residues 40–57 (YVNT…VFPL), 100–118 (GFSA…RVVL), 138–157 (KIYM…QALA), 204–223 (GVGP…VGSY), 244–264 (FVSS…ADVI), and 304–323 (GLMP…WLSV).

It belongs to the mitochondrial carrier (TC 2.A.29) family.

The protein localises to the mitochondrion inner membrane. Functionally, mitochondrial protein that is likely to be responsible for thermogenic respiration. Likely to function in mitochondrial uncoupling i.e. creating mitochondrial proton leaks across the inner mitochondrial membrane and can therefore dissipate the mitochondrial proton gradient and convert the energy of substrate oxidation into heat instead of ATP. Involved in cold tolerance, it is required for development to the adult stage at low temperatures. The sequence is that of Mitochondrial uncoupling protein 4C from Drosophila melanogaster (Fruit fly).